The sequence spans 262 residues: Cell division protein FtsQ (262 aa).

The Cytoplasmic portion of the chain corresponds to 1-20 (MSWSDKRRHWRARKSQVNWY). Residues 21–41 (LWSGIGFLSLVIGSFVFGGYL) form a helical membrane-spanning segment. Topologically, residues 42-262 (LHKFLNDAST…EPIINDEKPR (221 aa)) are periplasmic. A POTRA domain is found at 52 to 121 (LPIEAVAIKG…AKLRVYLQEQ (70 aa)).

This sequence belongs to the FtsQ/DivIB family. FtsQ subfamily. As to quaternary structure, part of a complex composed of FtsB, FtsL and FtsQ.

It localises to the cell inner membrane. Its function is as follows. Essential cell division protein. May link together the upstream cell division proteins, which are predominantly cytoplasmic, with the downstream cell division proteins, which are predominantly periplasmic. May control correct divisome assembly. This Shewanella oneidensis (strain ATCC 700550 / JCM 31522 / CIP 106686 / LMG 19005 / NCIMB 14063 / MR-1) protein is Cell division protein FtsQ.